A 464-amino-acid chain; its full sequence is tRNA-2-methylthio-N(6)-dimethylallyladenosine synthase (464 aa).

Residues 5–122 form the MTTase N-terminal domain; sequence RKLYVKSFGC…LPEMLARVRD (118 aa). [4Fe-4S] cluster-binding residues include Cys-14, Cys-50, Cys-85, Cys-163, Cys-167, and Cys-170. The Radical SAM core domain maps to 149–383; sequence KKRGPTAFVT…VLEASKTAFD (235 aa). In terms of domain architecture, TRAM spans 384–446; it reads RACMGRRFDI…PNSLAGQVVD (63 aa).

Belongs to the methylthiotransferase family. MiaB subfamily. In terms of assembly, monomer. [4Fe-4S] cluster serves as cofactor.

Its subcellular location is the cytoplasm. The enzyme catalyses N(6)-dimethylallyladenosine(37) in tRNA + (sulfur carrier)-SH + AH2 + 2 S-adenosyl-L-methionine = 2-methylsulfanyl-N(6)-dimethylallyladenosine(37) in tRNA + (sulfur carrier)-H + 5'-deoxyadenosine + L-methionine + A + S-adenosyl-L-homocysteine + 2 H(+). In terms of biological role, catalyzes the methylthiolation of N6-(dimethylallyl)adenosine (i(6)A), leading to the formation of 2-methylthio-N6-(dimethylallyl)adenosine (ms(2)i(6)A) at position 37 in tRNAs that read codons beginning with uridine. The protein is tRNA-2-methylthio-N(6)-dimethylallyladenosine synthase of Azorhizobium caulinodans (strain ATCC 43989 / DSM 5975 / JCM 20966 / LMG 6465 / NBRC 14845 / NCIMB 13405 / ORS 571).